A 299-amino-acid chain; its full sequence is Coenzyme PQQ synthesis protein B (299 aa).

The protein belongs to the PqqB family.

It participates in cofactor biosynthesis; pyrroloquinoline quinone biosynthesis. Its function is as follows. May be involved in the transport of PQQ or its precursor to the periplasm. The polypeptide is Coenzyme PQQ synthesis protein B (Xanthomonas euvesicatoria pv. vesicatoria (strain 85-10) (Xanthomonas campestris pv. vesicatoria)).